The chain runs to 462 residues: ATP synthase subunit beta 1 (462 aa).

Glycine 152 to threonine 159 serves as a coordination point for ATP.

The protein belongs to the ATPase alpha/beta chains family. In terms of assembly, F-type ATPases have 2 components, CF(1) - the catalytic core - and CF(0) - the membrane proton channel. CF(1) has five subunits: alpha(3), beta(3), gamma(1), delta(1), epsilon(1). CF(0) has four main subunits: a(1), b(1), b'(1) and c(9-12).

Its subcellular location is the cell inner membrane. The enzyme catalyses ATP + H2O + 4 H(+)(in) = ADP + phosphate + 5 H(+)(out). Produces ATP from ADP in the presence of a proton gradient across the membrane. The catalytic sites are hosted primarily by the beta subunits. The sequence is that of ATP synthase subunit beta 1 from Dinoroseobacter shibae (strain DSM 16493 / NCIMB 14021 / DFL 12).